Reading from the N-terminus, the 429-residue chain is Histidine--tRNA ligase (429 aa).

The protein belongs to the class-II aminoacyl-tRNA synthetase family. Homodimer.

The protein localises to the cytoplasm. It catalyses the reaction tRNA(His) + L-histidine + ATP = L-histidyl-tRNA(His) + AMP + diphosphate + H(+). The sequence is that of Histidine--tRNA ligase from Acidovorax ebreus (strain TPSY) (Diaphorobacter sp. (strain TPSY)).